The primary structure comprises 457 residues: Streptogrisin-C (457 aa).

Residues 1-34 (MERTTLRRRALVAGTATVAVGALALAGLTGVASA) constitute a signal peptide (tat-type signal). A propeptide spanning residues 35–202 (DPAATAAPPV…ARSAEQPRAL (168 aa)) is cleaved from the precursor. The interval 203 to 393 (ADIRGGDAYY…QAYGLTLVTS (191 aa)) is catalytic. A disulfide bridge connects residues C219 and C239. Active-site charge relay system residues include H238 and D266. Cystine bridges form between C305/C315 and C341/C368. Catalysis depends on S347, which acts as the Charge relay system. The tract at residues 393–412 (SGGGTPTDPPTTPPTDSPGG) is disordered. The linker stretch occupies residues 394–413 (GGGTPTDPPTTPPTDSPGGT). Over residues 399-408 (TDPPTTPPTD) the composition is skewed to pro residues. Residues 415-457 (AVGTAYAAGATVTYGGATYRCLQAHTAQPGWTPADVPALWQRV) enclose the Chitin-binding type-3 domain.

The protein belongs to the peptidase S1 family. As to quaternary structure, monomer. Predicted to be exported by the Tat system. The position of the signal peptide cleavage has not been experimentally proven.

Functionally, hydrolysis of proteins with specificity similar to chymotrypsin. May be specialized for the degradation of chitin-linked proteins. Has a primary specificity for large aliphatic or aromatic amino acids. This is Streptogrisin-C (sprC) from Streptomyces griseus.